The following is a 33-amino-acid chain: Pardaxin P-2 (33 aa).

This sequence belongs to the pardaxin family. In aqueous solution exists as a tetramer.

The protein localises to the secreted. It is found in the target cell membrane. In terms of biological role, exhibits unusual shark repellent and surfactant properties. Forms voltage-dependent, ion-permeable channels in membranes. At high concentration causes cell membrane lysis. In Pardachirus pavoninus (Peacock sole), this protein is Pardaxin P-2.